We begin with the raw amino-acid sequence, 576 residues long: Enolase 4 (576 aa).

The disordered stretch occupies residues 187 to 232 (ELRNEAMSEAPPQATPTSAPAKDKKGNDKGKKGNITENPLPPAEPP). A compositionally biased stretch (low complexity) spans 196-206 (APPQATPTSAP). Residues 207 to 217 (AKDKKGNDKGK) show a composition bias toward basic and acidic residues. 2 residues coordinate substrate: E302 and K524.

This sequence belongs to the enolase family.

It catalyses the reaction (2R)-2-phosphoglycerate = phosphoenolpyruvate + H2O. Its pathway is carbohydrate degradation; glycolysis; pyruvate from D-glyceraldehyde 3-phosphate: step 4/5. The sequence is that of Enolase 4 (eno4) from Danio rerio (Zebrafish).